The following is a 98-amino-acid chain: NADH-ubiquinone oxidoreductase chain 4L (98 aa).

Transmembrane regions (helical) follow at residues 1 to 21 (MTSINLNLMTAFLLALAGVLM), 28 to 48 (STLLCLEGMMLSLYIMLSLLI), and 59 to 79 (APLILLVISACEAAGGLALLV).

The protein belongs to the complex I subunit 4L family. Core subunit of respiratory chain NADH dehydrogenase (Complex I) which is composed of 45 different subunits.

It is found in the mitochondrion inner membrane. The enzyme catalyses a ubiquinone + NADH + 5 H(+)(in) = a ubiquinol + NAD(+) + 4 H(+)(out). Functionally, core subunit of the mitochondrial membrane respiratory chain NADH dehydrogenase (Complex I) which catalyzes electron transfer from NADH through the respiratory chain, using ubiquinone as an electron acceptor. Part of the enzyme membrane arm which is embedded in the lipid bilayer and involved in proton translocation. The polypeptide is NADH-ubiquinone oxidoreductase chain 4L (MT-ND4L) (Phascolarctos cinereus (Koala)).